Reading from the N-terminus, the 272-residue chain is Cerberus (272 aa).

Residues 1 to 17 (MHLLLVQLLVLLPLGKA) form the signal peptide. 4 disulfides stabilise this stretch: Cys162–Cys209, Cys176–Cys223, Cys186–Cys239, and Cys190–Cys241. Residues 162-246 (CRTVPFNQTI…EECQCMVKTE (85 aa)) form the CTCK domain. 2 N-linked (GlcNAc...) asparagine glycosylation sites follow: Asn168 and Asn222.

The protein belongs to the DAN family. Forms monomers and predominantly dimers. Post-translationally, N-glycosylated.

It is found in the secreted. In terms of biological role, cytokine that may play a role in anterior neural induction and somite formation during embryogenesis in part, through a BMP-inhibitory mechanism. Can regulate Nodal signaling during gastrulation as well as the formation and patterning of the primitive streak. In Mus musculus (Mouse), this protein is Cerberus (Cer1).